Consider the following 425-residue polypeptide: Aspyridones cluster regulator (425 aa).

The segment at residues 100-127 (CVDCRASKTRCTGEPEGCKRCTFRKRPC) is a DNA-binding region (zn(2)-C6 fungal-type). The segment at 132–159 (LRRSNTTQHGEQIEASSSTFTMSDEQGS) is disordered. Over residues 133–157 (RRSNTTQHGEQIEASSSTFTMSDEQ) the composition is skewed to polar residues.

The protein localises to the nucleus. Its function is as follows. Transcription factor involved in regulation of gene cluster that mediates the biosynthesis of aphidicolin. The sequence is that of Aspyridones cluster regulator (TF) from Neocamarosporium betae (Beet black rot fungus).